The primary structure comprises 65 residues: Large ribosomal subunit protein uL29 (65 aa).

This sequence belongs to the universal ribosomal protein uL29 family.

The chain is Large ribosomal subunit protein uL29 (rpmC) from Borreliella burgdorferi (strain ATCC 35210 / DSM 4680 / CIP 102532 / B31) (Borrelia burgdorferi).